Here is a 324-residue protein sequence, read N- to C-terminus: Quinolinate synthase (324 aa).

The iminosuccinate site is built by H44 and S62. Residue C107 participates in [4Fe-4S] cluster binding. Iminosuccinate is bound by residues 133 to 135 (YVN) and S150. C192 serves as a coordination point for [4Fe-4S] cluster. Iminosuccinate-binding positions include 218-220 (HPE) and T235. Position 278 (C278) interacts with [4Fe-4S] cluster.

It belongs to the quinolinate synthase family. Type 2 subfamily. It depends on [4Fe-4S] cluster as a cofactor.

It localises to the cytoplasm. It carries out the reaction iminosuccinate + dihydroxyacetone phosphate = quinolinate + phosphate + 2 H2O + H(+). Its pathway is cofactor biosynthesis; NAD(+) biosynthesis; quinolinate from iminoaspartate: step 1/1. In terms of biological role, catalyzes the condensation of iminoaspartate with dihydroxyacetone phosphate to form quinolinate. This Leptospira interrogans serogroup Icterohaemorrhagiae serovar copenhageni (strain Fiocruz L1-130) protein is Quinolinate synthase.